The chain runs to 324 residues: Beta-ketoacyl-[acyl-carrier-protein] synthase III (324 aa).

Catalysis depends on residues Cys112 and His249. The tract at residues 250–254 (QANDR) is ACP-binding. Asn279 is a catalytic residue.

Belongs to the thiolase-like superfamily. FabH family. As to quaternary structure, homodimer.

The protein resides in the cytoplasm. The catalysed reaction is malonyl-[ACP] + acetyl-CoA + H(+) = 3-oxobutanoyl-[ACP] + CO2 + CoA. It participates in lipid metabolism; fatty acid biosynthesis. Functionally, catalyzes the condensation reaction of fatty acid synthesis by the addition to an acyl acceptor of two carbons from malonyl-ACP. Catalyzes the first condensation reaction which initiates fatty acid synthesis and may therefore play a role in governing the total rate of fatty acid production. Possesses both acetoacetyl-ACP synthase and acetyl transacylase activities. Its substrate specificity determines the biosynthesis of branched-chain and/or straight-chain of fatty acids. The polypeptide is Beta-ketoacyl-[acyl-carrier-protein] synthase III (Streptococcus gordonii (strain Challis / ATCC 35105 / BCRC 15272 / CH1 / DL1 / V288)).